The following is a 1168-amino-acid chain: Transcription-repair-coupling factor (1168 aa).

The Helicase ATP-binding domain maps to 633-794; the sequence is DMQKSRPMDR…MLGVRDLSVI (162 aa). 646-653 contacts ATP; sequence GDVGYGKT. The DEEQ box motif lies at 747–750; the sequence is DEEQ. The region spanning 808 to 969 is the Helicase C-terminal domain; sequence VLEQNMSFIK…GFKIAMRDLN (162 aa).

The protein in the N-terminal section; belongs to the UvrB family. This sequence in the C-terminal section; belongs to the helicase family. RecG subfamily.

The protein resides in the cytoplasm. Couples transcription and DNA repair by recognizing RNA polymerase (RNAP) stalled at DNA lesions. Mediates ATP-dependent release of RNAP and its truncated transcript from the DNA, and recruitment of nucleotide excision repair machinery to the damaged site. The chain is Transcription-repair-coupling factor from Staphylococcus aureus (strain bovine RF122 / ET3-1).